Here is a 493-residue protein sequence, read N- to C-terminus: Glutamyl-tRNA(Gln) amidotransferase subunit A (493 aa).

Residues K78 and S158 each act as charge relay system in the active site. Residue S182 is the Acyl-ester intermediate of the active site.

This sequence belongs to the amidase family. GatA subfamily. In terms of assembly, heterotrimer of A, B and C subunits.

It catalyses the reaction L-glutamyl-tRNA(Gln) + L-glutamine + ATP + H2O = L-glutaminyl-tRNA(Gln) + L-glutamate + ADP + phosphate + H(+). Functionally, allows the formation of correctly charged Gln-tRNA(Gln) through the transamidation of misacylated Glu-tRNA(Gln) in organisms which lack glutaminyl-tRNA synthetase. The reaction takes place in the presence of glutamine and ATP through an activated gamma-phospho-Glu-tRNA(Gln). This is Glutamyl-tRNA(Gln) amidotransferase subunit A from Azorhizobium caulinodans (strain ATCC 43989 / DSM 5975 / JCM 20966 / LMG 6465 / NBRC 14845 / NCIMB 13405 / ORS 571).